The chain runs to 252 residues: 3-deoxy-manno-octulosonate cytidylyltransferase (252 aa).

This sequence belongs to the KdsB family.

The protein localises to the cytoplasm. The catalysed reaction is 3-deoxy-alpha-D-manno-oct-2-ulosonate + CTP = CMP-3-deoxy-beta-D-manno-octulosonate + diphosphate. The protein operates within nucleotide-sugar biosynthesis; CMP-3-deoxy-D-manno-octulosonate biosynthesis; CMP-3-deoxy-D-manno-octulosonate from 3-deoxy-D-manno-octulosonate and CTP: step 1/1. It functions in the pathway bacterial outer membrane biogenesis; lipopolysaccharide biosynthesis. Activates KDO (a required 8-carbon sugar) for incorporation into bacterial lipopolysaccharide in Gram-negative bacteria. The protein is 3-deoxy-manno-octulosonate cytidylyltransferase of Rhodospirillum rubrum (strain ATCC 11170 / ATH 1.1.1 / DSM 467 / LMG 4362 / NCIMB 8255 / S1).